The primary structure comprises 380 residues: Tryptophan 2,3-dioxygenase (380 aa).

Residues 57-61 (FIITH) and Arg-128 each bind substrate. His-313 contacts heme. Residue Thr-328 participates in substrate binding.

This sequence belongs to the tryptophan 2,3-dioxygenase family. Homotetramer. Dimer of dimers. Heme is required as a cofactor.

It catalyses the reaction L-tryptophan + O2 = N-formyl-L-kynurenine. It functions in the pathway amino-acid degradation; L-tryptophan degradation via kynurenine pathway; L-kynurenine from L-tryptophan: step 1/2. Its pathway is pigment biosynthesis; ommochrome biosynthesis. Its function is as follows. Heme-dependent dioxygenase that catalyzes the oxidative cleavage of the L-tryptophan (L-Trp) pyrrole ring and converts L-tryptophan to N-formyl-L-kynurenine. Catalyzes the oxidative cleavage of the indole moiety. This chain is Tryptophan 2,3-dioxygenase, found in Drosophila virilis (Fruit fly).